Consider the following 617-residue polypeptide: Secretogranin-2 (617 aa).

Positions 1-27 (MAEAKTHWLGAALSLIPLIFLISGAEA) are cleaved as a signal peptide. The propeptide occupies 28 to 30 (ASF). The disordered stretch occupies residues 120 to 143 (QAENEPQSAPKENKPYALNSEKNF). Sulfotyrosine is present on tyrosine 151. Phosphoserine is present on serine 174. Residues 182–200 (TNEIVEEQYTPQSLATLES) are O-glycosylated at one site. Basic and acidic residues-rich tracts occupy residues 257–284 (IESQTQEEVRDSKENIEKNEQINDEMKR) and 293–302 (EDLRKESKDQ). Positions 257–302 (IESQTQEEVRDSKENIEKNEQINDEMKRSGQLGIQEEDLRKESKDQ) are disordered. Serine 268 is modified (phosphoserine). A phosphoserine mark is found at serine 432, serine 532, serine 555, and serine 556. The interval 552 to 583 (NQGSSQETDKLAPVSKRFPVGPPKNDDTPNRQ) is disordered.

Belongs to the chromogranin/secretogranin protein family. Interacts with Secretogranin III/SCG3. O-glycosylated.

The protein localises to the secreted. Its function is as follows. Neuroendocrine protein of the granin family that regulates the biogenesis of secretory granules. The polypeptide is Secretogranin-2 (SCG2) (Homo sapiens (Human)).